The chain runs to 2568 residues: Highly reducing polyketide synthase resH (2568 aa).

The Ketosynthase family 3 (KS3) domain occupies 9–437; that stretch reads PEPIAIVGMA…GANAHAILDA (429 aa). Catalysis depends on for beta-ketoacyl synthase activity residues Cys-184, His-319, and His-359. In terms of domain architecture, Malonyl-CoA:ACP transacylase (MAT) spans 549 to 877; that stretch reads FIFTGQGAQW…KLAGSLFLSG (329 aa). Positions 942–1081 are N-terminal hotdog fold; that stretch reads HDLLGSRLPG…TNDQLLWPDD (140 aa). Residues 942-1244 form the PKS/mFAS DH domain; that stretch reads HDLLGSRLPG…FSSLETASSD (303 aa). His-974 functions as the Proton acceptor; for dehydratase activity in the catalytic mechanism. The segment at 1091–1244 is C-terminal hotdog fold; it reads NKDSYDRRWY…FSSLETASSD (154 aa). Asp-1156 (proton donor; for dehydratase activity) is an active-site residue. The tract at residues 1295-1595 is methyltransferase (CMet) domain; the sequence is VTRLAIRSSA…SGADVVLDDY (301 aa). Residues 1853 to 2154 form the Enoyl reductase (ER) domain; sequence GRLDSFYFKE…QEDSVGLAVL (302 aa). A Ketoreductase (KR) domain is found at 2177–2357; it reads ASYLLIGCLG…QATSIALGMI (181 aa). Positions 2485–2563 constitute a Carrier domain; sequence AVKSAILGLI…GLADQVVSLA (79 aa). An O-(pantetheine 4'-phosphoryl)serine modification is found at Ser-2522.

Requires pantetheine 4'-phosphate as cofactor.

It participates in antifungal biosynthesis. Functionally, highly reducing polyketide synthase; part of the gene cluster that mediates the biosynthesis of the tetrahydropyranyl antifungal agent restricticin that acts as an inhibitor of CYP51 and blocks the ergosterol biosynthesis. The highly reducing polyketide synthase resH, the short chain dehydrogenase resG, the cyclase resF, the FAD-dependent monooxygenase resA and the enoylreductase resD are required to generate the first stable intermediate desmethylrestrictinol. ResH with resD biosynthesize the first polyketide chain intermediate that is reduced by resG, followed by epoxidation by resA before 6-endo cyclization via epoxide opening by resF leads to desmethylrestrictinol. The methyltransferase resE then catalyzes the C4 O-methylation of desmethylrestrictinol to produce restrictinol, and the nonribosomal peptide synthetase resC catalyzes the C3 esterification of restrictinol with glycine that leads to restricticin. The polypeptide is Highly reducing polyketide synthase resH (Aspergillus sclerotiorum).